A 70-amino-acid chain; its full sequence is Cuticle protein 16 isoform b (70 aa).

The sequence is that of Cuticle protein 16 isoform b from Limulus polyphemus (Atlantic horseshoe crab).